We begin with the raw amino-acid sequence, 366 residues long: Alcohol dehydrogenase (366 aa).

Cysteine 41, histidine 62, glutamate 63, and aspartate 167 together coordinate Zn(2+).

The protein belongs to the zinc-containing alcohol dehydrogenase family. In terms of assembly, homotetramer. Zn(2+) is required as a cofactor.

It carries out the reaction a primary alcohol + NAD(+) = an aldehyde + NADH + H(+). The enzyme catalyses a secondary alcohol + NAD(+) = a ketone + NADH + H(+). It catalyses the reaction (R,R)-butane-2,3-diol + NAD(+) = (R)-acetoin + NADH + H(+). The catalysed reaction is an aldehyde + NAD(+) + H2O = a carboxylate + NADH + 2 H(+). Functionally, multifunctional alcohol dehydrogenase exhibiting NAD(+)-dependent dehydrogenase activities for 2,3-butanediol, ethanol and acetaldehyde, and reductase activities for acetoin (NADH-dependent), and diacetyl and acetaldehyde (independently of whether NADH or NADPH is the reductant). The rate of oxidation of 2,3-butanediol is much higher than for the oxidation of ethanol. Has acetaldehyde dehydrogenase activity leading to acetate formation. May function in the release of excess reducing power in the absence of exogenous hydrogen acceptors such as oxygen. The sequence is that of Alcohol dehydrogenase (adh) from Cupriavidus necator (strain ATCC 17699 / DSM 428 / KCTC 22496 / NCIMB 10442 / H16 / Stanier 337) (Ralstonia eutropha).